A 508-amino-acid chain; its full sequence is Steroid 17-alpha-hydroxylase/17,20 lyase (508 aa).

A heme-binding site is contributed by Cys445.

It belongs to the cytochrome P450 family. Heme is required as a cofactor.

It localises to the membrane. The catalysed reaction is a C21-steroid + reduced [NADPH--hemoprotein reductase] + O2 = a 17alpha-hydroxy-C21-steroid + oxidized [NADPH--hemoprotein reductase] + H2O + H(+). It carries out the reaction 17alpha-hydroxyprogesterone + reduced [NADPH--hemoprotein reductase] + O2 = androst-4-ene-3,17-dione + acetate + oxidized [NADPH--hemoprotein reductase] + H2O + 2 H(+). It catalyses the reaction 17alpha-hydroxypregnenolone + reduced [NADPH--hemoprotein reductase] + O2 = 3beta-hydroxyandrost-5-en-17-one + acetate + oxidized [NADPH--hemoprotein reductase] + H2O + 2 H(+). Its pathway is lipid metabolism; steroid biosynthesis. Conversion of pregnenolone and progesterone to their 17-alpha-hydroxylated products and subsequently to dehydroepiandrosterone (DHEA) and androstenedione. Catalyzes both the 17-alpha-hydroxylation and the 17,20-lyase reaction. The chain is Steroid 17-alpha-hydroxylase/17,20 lyase (CYP17A1) from Gallus gallus (Chicken).